Here is a 321-residue protein sequence, read N- to C-terminus: MDEYRELISVLPLETVEYAFAYGSGAIQQQNEDKSEKMVDFVIVTKNAQEFHRDNILKNPQHYSLLRLMGPKMIEKIQCNFAARVYYNTHVKVGKRKIKYGVISYENVKQDLLDWRWIYISGRLHKPVLEVIKPRQDMCDLVTENRRSALHSSLLLLPESFTLKQLFHKIVGLSYTGDFRMVVGEDKNKINKIVEGNYEELLRVYEPLMNDDARLSVMSPAKLIQDGSTTAIYHRLNLLPSEVLNRIQKNMNRVQKRQRDAEEVIFSLAHRHDVAATVETAIGGIIRPVSLSQTAKNAFSAGVTRSIIYSMAKMSKFLKSK.

Belongs to the TAM41 family. It depends on Mg(2+) as a cofactor. Requires Co(2+) as cofactor. Cu(2+) is required as a cofactor.

It is found in the mitochondrion inner membrane. It carries out the reaction a 1,2-diacyl-sn-glycero-3-phosphate + CTP + H(+) = a CDP-1,2-diacyl-sn-glycerol + diphosphate. It participates in phospholipid metabolism; CDP-diacylglycerol biosynthesis; CDP-diacylglycerol from sn-glycerol 3-phosphate: step 3/3. Its function is as follows. Catalyzes the formation of CDP-diacylglycerol (CDP-DAG) from phosphatidic acid (PA) in the mitochondrial inner membrane. Required for the biosynthesis of the dimeric phospholipid cardiolipin, which stabilizes supercomplexes of the mitochondrial respiratory chain in the mitochondrial inner membrane. This chain is Phosphatidate cytidylyltransferase, mitochondrial, found in Caenorhabditis elegans.